The following is a 423-amino-acid chain: 26S proteasome regulatory subunit 6A homolog (423 aa).

Position 211-218 (211-218 (GPPGTGKT)) interacts with ATP.

This sequence belongs to the AAA ATPase family.

The protein resides in the cytoplasm. The protein localises to the nucleus. The 26S proteasome is involved in the ATP-dependent degradation of ubiquitinated proteins. The regulatory (or ATPase) complex confers ATP dependency and substrate specificity to the 26S complex. This chain is 26S proteasome regulatory subunit 6A homolog (TBP1), found in Solanum lycopersicum (Tomato).